Consider the following 26-residue polypeptide: Dermaseptin-J1 (26 aa).

Position 26 is a valine amide (valine 26).

Expressed by the skin glands.

The protein localises to the secreted. Has antimicrobial activity. This chain is Dermaseptin-J1, found in Phasmahyla jandaia (Jandaia leaf frog).